The sequence spans 227 residues: 27 kDa glycoprotein (227 aa).

The first 17 residues, 1-17, serve as a signal peptide directing secretion; sequence MMWKTVLITIFAAGVLA. Residues N118 and N173 are each glycosylated (N-linked (GlcNAc...) asparagine).

Belongs to the UPF0408 family. In terms of tissue distribution, expressed in the subesophageal body, fat bodies, hemocytes, midgut and Malpighian tubules. Not expressed in silk glands.

The protein localises to the secreted. This Bombyx mori (Silk moth) protein is 27 kDa glycoprotein.